Here is an 807-residue protein sequence, read N- to C-terminus: SWI/SNF complex subunit SWI3C (807 aa).

Positions 1–74 (MPASEDRRGK…DPGLGIGEVV (74 aa)) are disordered. The span at 28-54 (EEEDMEEEDEENNNNNNEEMDDVENAD) shows a compositional bias: acidic residues. The SWIRM domain occupies 176–274 (HVLPMHSDWF…YCATAQSHPG (99 aa)). The ZZ-type; degenerate zinc-finger motif lies at 340-394 (LCDSHCNHCSRPLPTVYFQSQKKGDILLCCDCFHHGRFVVGHSCLDFVRVDPMKF). Zn(2+) contacts are provided by Cys345, Cys348, Cys368, and Cys371. Positions 398-449 (QDGDNWTDQETLLLLEAVELYNENWVQIADHVGSKSKAQCILHFLRLPVEDG) constitute an SANT domain. Composition is skewed to polar residues over residues 458–467 (GVTNTENPTN) and 552–569 (ENQQQDGAHKTSSQNGAE). Disordered regions lie at residues 458-487 (GVTNTENPTNGYDHKGTDSNGDLPGYSEQG) and 549-571 (LDGENQQQDGAHKTSSQNGAEAQ). Residues 598 to 656 (ADHEEREIQRLSANIVNHQLKRMELKLKQFAEIETLLMKECEQVEKTRQRFSAERARML) adopt a coiled-coil conformation. 2 stretches are compositionally biased toward low complexity: residues 692 to 703 (QHQQQQASATSQ) and 726 to 739 (QQQQQQQQQQQQQQ). Disordered stretches follow at residues 692–713 (QHQQQQASATSQPSIIPGFSNN), 721–740 (HFMARQQQQQQQQQQQQQQA), and 781–807 (SINQPSFSHPMVRSSTGSGSGSGLGLN). A compositionally biased stretch (gly residues) spans 798–807 (SGSGSGLGLN).

In terms of assembly, heterodimer. Interacts with SWI3A, SWI3B and BRM, but not with BSH. Interacts with MORC6 and SUVH9. Expressed in roots, stems, leaves, flowers and siliques.

Its subcellular location is the nucleus. Component of a multiprotein complex equivalent of the SWI/SNF complex, an ATP-dependent chromatin-remodeling complex, which is required for the positive and negative regulation of gene expression of a large number of genes. It changes chromatin structure by altering DNA-histone contacts within a nucleosome, leading eventually to a change in nucleosome position, thus facilitating or repressing binding of gene-specific transcription factors. The chain is SWI/SNF complex subunit SWI3C (SWI3C) from Arabidopsis thaliana (Mouse-ear cress).